Reading from the N-terminus, the 221-residue chain is Ribonuclease HII (221 aa).

Positions 29 to 220 (RRVAGVDEVG…LRDLQAGEIG (192 aa)) constitute an RNase H type-2 domain. The a divalent metal cation site is built by Asp-35, Glu-36, and Asp-129. The segment at 198 to 221 (LGPSPQHRRSFAPLRDLQAGEIGG) is disordered.

This sequence belongs to the RNase HII family. It depends on Mn(2+) as a cofactor. Mg(2+) serves as cofactor.

Its subcellular location is the cytoplasm. It catalyses the reaction Endonucleolytic cleavage to 5'-phosphomonoester.. Endonuclease that specifically degrades the RNA of RNA-DNA hybrids. The protein is Ribonuclease HII of Synechococcus sp. (strain JA-3-3Ab) (Cyanobacteria bacterium Yellowstone A-Prime).